Reading from the N-terminus, the 230-residue chain is MQDVLLQVQAVSKSYHDGDVTTQVLSDVDLQVFKGEQLAIVGTSGSGKSTLLHIMGTLDKPSSGKVLLAGEDLYQVSSARQAQIRNQDLGFIYQFHHLLPEFTALENVAMPAFIQGRDRTLAQADAKVLLERVGLGHRMSHIPAELSGGERQRVAIARALINKPKLVLADEPTGNLDAKSGEAVYELIRELANQLGTAFVVVTHDPKLAARMDRQLTMKNGYLQVPESAQ.

Residues 6 to 230 (LQVQAVSKSY…GYLQVPESAQ (225 aa)) form the ABC transporter domain. 42–49 (GTSGSGKS) provides a ligand contact to ATP.

The protein belongs to the ABC transporter superfamily. Lipoprotein translocase (TC 3.A.1.125) family. As to quaternary structure, the complex is composed of two ATP-binding proteins (LolD) and two transmembrane proteins (LolC and LolE).

The protein resides in the cell inner membrane. Functionally, part of the ABC transporter complex LolCDE involved in the translocation of mature outer membrane-directed lipoproteins, from the inner membrane to the periplasmic chaperone, LolA. Responsible for the formation of the LolA-lipoprotein complex in an ATP-dependent manner. In Shewanella oneidensis (strain ATCC 700550 / JCM 31522 / CIP 106686 / LMG 19005 / NCIMB 14063 / MR-1), this protein is Lipoprotein-releasing system ATP-binding protein LolD.